The chain runs to 402 residues: Omega-3 fatty acid desaturase fat-1 (402 aa).

The next 4 membrane-spanning stretches (helical) occupy residues 79–99 (LVQD…FEYF), 101–121 (LFGY…LFVV), 235–255 (CVIS…IAGS), and 260–280 (FWYY…VTYL).

The protein belongs to the fatty acid desaturase type 1 family.

The protein localises to the membrane. It catalyses the reaction (9Z,12Z)-octadecadienoyl-CoA + 2 Fe(II)-[cytochrome b5] + O2 + 2 H(+) = (9Z,12Z,15Z)-octadecatrienoyl-CoA + 2 Fe(III)-[cytochrome b5] + 2 H2O. It carries out the reaction (8Z,11Z,14Z)-eicosatrienoyl-CoA + 2 Fe(II)-[cytochrome b5] + O2 + 2 H(+) = (8Z,11Z,14Z,17Z)-eicosatetraenoyl-CoA + 2 Fe(III)-[cytochrome b5] + 2 H2O. The enzyme catalyses (5Z,8Z,11Z,14Z)-eicosatetraenoyl-CoA + 2 Fe(II)-[cytochrome b5] + O2 + 2 H(+) = (5Z,8Z,11Z,14Z,17Z)-eicosapentaenoyl-CoA + 2 Fe(III)-[cytochrome b5] + 2 H2O. The catalysed reaction is (7Z,10Z,13Z,16Z)-docosatetraenoyl-CoA + 2 Fe(II)-[cytochrome b5] + O2 + 2 H(+) = (7Z,10Z,13Z,16Z,19Z)-docosapentaenoyl-CoA + 2 Fe(III)-[cytochrome b5] + 2 H2O. It catalyses the reaction (6Z,9Z,12Z)-octadecatrienoyl-CoA + 2 Fe(II)-[cytochrome b5] + O2 + 2 H(+) = (6Z,9Z,12Z,15Z)-octadecatetraenoyl-CoA + 2 Fe(III)-[cytochrome b5] + 2 H2O. It functions in the pathway lipid metabolism; polyunsaturated fatty acid biosynthesis. Its function is as follows. Omega-3 fatty acid desaturase that recognizes a range of 18- and 20-carbon omega-6 substrates. Introduces a double bond in the fatty acid chain three carbons away from terminal methyl group to biosynthesize n-3 (omega-3) polyunsaturated fatty acids (PUFAs) endogenously (PUFAs are essential for membrane structure and many cellular and physiological processes). Acts on a number of substrates like linoleoyl-CoA ((9Z,12Z)-octadecadienoyl-CoA, 18:2n-6), dihomo-gamma-linolenoyl-CoA ((8Z,11Z,14Z)-eicosatrienoyl-CoA, 20:3n-6), and arachidonoyl-CoA ((5Z,8Z,11Z,14Z)-eicosatetraenoyl-CoA, 20:4n-6), to generate alpha-linolenoyl-CoA ((9Z,12Z,15Z)-octadecatrienoyl-CoA, 18:3n-3), (8Z,11Z,14Z,17Z)-eicosatetraenoyl-CoA (20:4n-3) and (5Z,8Z,11Z,14Z,17Z)-eicosapentaenoyl-CoA (20:5n-3) respectively. Unlike plants, Caenorhabditis elegans desaturases seem to use fatty acyl-CoAs as substrates. The chain is Omega-3 fatty acid desaturase fat-1 (fat-1) from Caenorhabditis elegans.